Consider the following 324-residue polypeptide: Delta-aminolevulinic acid dehydratase (324 aa).

Residues Cys-120, Cys-122, and Cys-130 each coordinate Zn(2+). Catalysis depends on Lys-195, which acts as the Schiff-base intermediate with substrate. 5-aminolevulinate contacts are provided by Arg-205 and Arg-217. Glu-233 provides a ligand contact to Mg(2+). The active-site Schiff-base intermediate with substrate is the Lys-248. 2 residues coordinate 5-aminolevulinate: Ser-274 and Tyr-313.

It belongs to the ALAD family. As to quaternary structure, homooctamer. Requires Zn(2+) as cofactor.

The catalysed reaction is 2 5-aminolevulinate = porphobilinogen + 2 H2O + H(+). It participates in porphyrin-containing compound metabolism; protoporphyrin-IX biosynthesis; coproporphyrinogen-III from 5-aminolevulinate: step 1/4. In terms of biological role, catalyzes an early step in the biosynthesis of tetrapyrroles. Binds two molecules of 5-aminolevulinate per subunit, each at a distinct site, and catalyzes their condensation to form porphobilinogen. The chain is Delta-aminolevulinic acid dehydratase (hemB) from Bacillus subtilis (strain 168).